A 217-amino-acid chain; its full sequence is Large ribosomal subunit protein uL1 (217 aa).

This sequence belongs to the universal ribosomal protein uL1 family.

This Eremothecium gossypii (strain ATCC 10895 / CBS 109.51 / FGSC 9923 / NRRL Y-1056) (Yeast) protein is Large ribosomal subunit protein uL1 (RPL10A).